A 1020-amino-acid chain; its full sequence is Sodium/potassium-transporting ATPase subunit alpha-2 (1020 aa).

The propeptide occupies 1 to 5 (MGRGA). Positions 1-31 (MGRGAGREYSPAATTAENGGGKKKQKEKELD) are disordered. At 6 to 85 (GREYSPAATT…NALTPPPTTP (80 aa)) the chain is on the cytoplasmic side. Ser10 is subject to Phosphoserine. The tract at residues 80–82 (PPP) is interaction with phosphoinositide-3 kinase. Residues 86–106 (EWVKFCRQLFGGFSILLWIGA) form a helical membrane-spanning segment. At 107 to 129 (ILCFLAYGIQAAMEDEPSNDNLY) the chain is on the extracellular side. Residues 130–150 (LGVVLAAVVIVTGCFSYYQEA) traverse the membrane as a helical segment. The Cytoplasmic portion of the chain corresponds to 151–286 (KSSKIMDSFK…VGRTPIAMEI (136 aa)). The segment covering 212-227 (DNSSLTGESEPQTRSP) has biased composition (polar residues). The disordered stretch occupies residues 212-231 (DNSSLTGESEPQTRSPEFTH). The chain crosses the membrane as a helical span at residues 287-306 (EHFIQLITGVAVFPGVSFFV). Residues 307–318 (LSLILGYSWLEA) are Extracellular-facing. Residues 319–336 (VIFLIGIIVANVPEGLLA) form a helical membrane-spanning segment. At 337 to 769 (TVTVCLTLTA…EEGRLVFDNL (433 aa)) the chain is on the cytoplasmic side. Residue Asp374 is the 4-aspartylphosphate intermediate of the active site. A phosphoserine mark is found at Ser439, Ser450, Ser496, and Ser559. Residue Thr570 is modified to Phosphothreonine. Phosphoserine occurs at positions 587 and 672. Mg(2+)-binding residues include Asp714 and Asp718. A helical transmembrane segment spans residues 770-789 (KKSIAYTLTSNIPEITPFLL). The Extracellular segment spans residues 790–799 (FIIANIPLPL). Residues 800-820 (GTVTILCIDLGTDMVPAISLA) traverse the membrane as a helical segment. At 821–840 (YEAAESDIMKRQPRNSQTDK) the chain is on the cytoplasmic side. Ser826 carries the phosphoserine modification. Residues 841-863 (LVNERLISMAYGQIGMIQALGGF) form a helical membrane-spanning segment. At 864-915 (FTYFVILAENGFLPSRLLGIRLDWDDRTMNDLEDSYGQEWTYEQRKVVEFTC) the chain is on the extracellular side. Residues 916 to 935 (HTAFFASIVVVQWADLIICK) form a helical membrane-spanning segment. The Cytoplasmic portion of the chain corresponds to 936–948 (TRRNSVFQQGMKN). Ser940 carries the phosphoserine; by PKA modification. Residues 949–967 (KILIFGLLEETALAAFLSY) traverse the membrane as a helical segment. The Extracellular segment spans residues 968–982 (CPGMGVALRMYPLKV). The helical transmembrane segment at 983 to 1003 (TWWFCAFPYSLLIFIYDEVRK) threads the bilayer. Topologically, residues 1004–1020 (LILRRYPGGWVEKETYY) are cytoplasmic.

Belongs to the cation transport ATPase (P-type) (TC 3.A.3) family. Type IIC subfamily. As to quaternary structure, the sodium/potassium-transporting ATPase is composed of a catalytic alpha subunit, an auxiliary non-catalytic beta subunit and an additional regulatory subunit. Interacts with regulatory subunit FXYD1.

The protein resides in the membrane. It is found in the cell membrane. It catalyses the reaction K(+)(out) + Na(+)(in) + ATP + H2O = K(+)(in) + Na(+)(out) + ADP + phosphate + H(+). Its function is as follows. This is the catalytic component of the active enzyme, which catalyzes the hydrolysis of ATP coupled with the exchange of sodium and potassium ions across the plasma membrane. This action creates the electrochemical gradient of sodium and potassium, providing the energy for active transport of various nutrients. This is Sodium/potassium-transporting ATPase subunit alpha-2 (ATP1A2) from Pongo abelii (Sumatran orangutan).